A 383-amino-acid polypeptide reads, in one-letter code: ATP phosphoribosyltransferase regulatory subunit (383 aa).

It belongs to the class-II aminoacyl-tRNA synthetase family. HisZ subfamily. As to quaternary structure, heteromultimer composed of HisG and HisZ subunits.

It localises to the cytoplasm. It participates in amino-acid biosynthesis; L-histidine biosynthesis; L-histidine from 5-phospho-alpha-D-ribose 1-diphosphate: step 1/9. Required for the first step of histidine biosynthesis. May allow the feedback regulation of ATP phosphoribosyltransferase activity by histidine. This chain is ATP phosphoribosyltransferase regulatory subunit, found in Neisseria meningitidis serogroup C (strain 053442).